The following is a 599-amino-acid chain: Leucine zipper putative tumor suppressor 1 (599 aa).

A lipid anchor (N-myristoyl glycine) is attached at G2. Disordered stretches follow at residues 135-190 (GAIL…TTSS) and 288-324 (EFAS…KSQR). Residues 153 to 162 (PPDKPKEQEL) are compositionally biased toward basic and acidic residues. Polar residues predominate over residues 174-190 (SGRNSMSSLPTHSTTSS). The stretch at 256 to 572 (LSTDECTIQE…LEKALQQLAR (317 aa)) forms a coiled coil. Residues 288-313 (EFASGQTFEERPRRTRDELECLEPKS) are compositionally biased toward basic and acidic residues.

The protein belongs to the LZTS family. As to quaternary structure, binds EEF1G, TLK2 and CDK1. Post-translationally, phosphorylated on serine residues. Hyperphosphorylated by the cAMP-dependent kinase PKA during cell-cycle progression.

The protein localises to the cytoplasm. The protein resides in the cell membrane. Its subcellular location is the cell projection. It localises to the dendritic spine. It is found in the postsynaptic density. The protein localises to the synapse. In terms of biological role, involved in the regulation of cell growth. May stabilize the active CDC2-cyclin B1 complex and thereby contribute to the regulation of the cell cycle and the prevention of uncontrolled cell proliferation. May act as tumor suppressor. This chain is Leucine zipper putative tumor suppressor 1 (Lzts1), found in Mus musculus (Mouse).